Here is a 366-residue protein sequence, read N- to C-terminus: Ferrochelatase (366 aa).

Residues H210 and E293 each coordinate Fe cation.

It belongs to the ferrochelatase family.

It is found in the cytoplasm. The catalysed reaction is heme b + 2 H(+) = protoporphyrin IX + Fe(2+). It participates in porphyrin-containing compound metabolism; protoheme biosynthesis; protoheme from protoporphyrin-IX: step 1/1. Functionally, catalyzes the ferrous insertion into protoporphyrin IX. The polypeptide is Ferrochelatase (Leptospira borgpetersenii serovar Hardjo-bovis (strain JB197)).